The chain runs to 413 residues: Scarecrow-like protein 21 (413 aa).

A GRAS domain is found at isoleucine 41–lysine 413. The leucine repeat I (LRI) stretch occupies residues glycine 48–serine 108. Positions valine 127 to glycine 192 are VHIID. The short motif at isoleucine 158–aspartate 162 is the VHIID element. A leucine repeat II (LRII) region spans residues threonine 201–asparagine 233. The interval leucine 242–asparagine 336 is PFYRE. An SAW region spans residues alanine 339 to lysine 413.

This sequence belongs to the GRAS family. In terms of assembly, interacts with Meloidogyne incognita 16D10. In terms of tissue distribution, expressed in seedlings, roots, cotyledons, leaves and flowers.

It is found in the nucleus. Its function is as follows. Probable transcription factor involved in plant development. The chain is Scarecrow-like protein 21 (SCL21) from Arabidopsis thaliana (Mouse-ear cress).